The primary structure comprises 245 residues: Endogenous retrovirus group K member 5 Env polyprotein (245 aa).

A truncated surface protein region spans residues 1–245; sequence MVTPVTWMDN…TLEFGLEIKL (245 aa).

It belongs to the beta type-B retroviral envelope protein family. HERV class-II K(HML-2) env subfamily. As to expression, expressed in lung, placenta, testis, peripheral blood lymphocytes, and teratocarcinoma cell lines.

It is found in the virion. Retroviral envelope proteins mediate receptor recognition and membrane fusion during early infection. Endogenous envelope proteins may have kept, lost or modified their original function during evolution. The polypeptide is Endogenous retrovirus group K member 5 Env polyprotein (ERVK-5) (Homo sapiens (Human)).